The primary structure comprises 306 residues: N-acetylmuramic acid 6-phosphate etherase (306 aa).

Residues 55–218 form the SIS domain; the sequence is IVPRMKKGGR…STGVMIKLGK (164 aa). E83 functions as the Proton donor in the catalytic mechanism. Residue E114 is part of the active site.

It belongs to the GCKR-like family. MurNAc-6-P etherase subfamily. Homodimer.

It carries out the reaction N-acetyl-D-muramate 6-phosphate + H2O = N-acetyl-D-glucosamine 6-phosphate + (R)-lactate. The protein operates within amino-sugar metabolism; N-acetylmuramate degradation. In terms of biological role, specifically catalyzes the cleavage of the D-lactyl ether substituent of MurNAc 6-phosphate, producing GlcNAc 6-phosphate and D-lactate. The sequence is that of N-acetylmuramic acid 6-phosphate etherase from Caldanaerobacter subterraneus subsp. tengcongensis (strain DSM 15242 / JCM 11007 / NBRC 100824 / MB4) (Thermoanaerobacter tengcongensis).